Reading from the N-terminus, the 384-residue chain is WAT1-related protein At4g08290 (384 aa).

10 helical membrane passes run 15–35, 43–63, 73–93, 104–124, 140–160, 186–206, 219–239, 255–275, 282–302, and 307–327; these read LLMI…MATL, VVIV…ALIF, LSVL…DQGF, TYTS…AWIL, IIGT…KGPL, WVVG…FYVL, SLSA…ALVV, FAPL…QGMV, VFVT…ASFI, and IHFG…MVVW. EamA domains are found at residues 25–154 and 198–326; these read AGTY…LVMT and VAWS…YMVV.

It belongs to the drug/metabolite transporter (DMT) superfamily. Plant drug/metabolite exporter (P-DME) (TC 2.A.7.4) family.

Its subcellular location is the membrane. The protein is WAT1-related protein At4g08290 of Arabidopsis thaliana (Mouse-ear cress).